The following is a 185-amino-acid chain: Prenylated Rab acceptor protein 1 (185 aa).

At 1 to 78 (MAAQKDQQKD…RNVEYYQSNY (78 aa)) the chain is on the cytoplasmic side. Residues 30–54 (AGREWLERRRATIRPWGTFVDQQRF) are required for interaction with prenylated RAB3A and VAMP2. Transmembrane regions (helical) follow at residues 79 to 94 (VFVF…VTSP) and 95 to 112 (MLLV…ILYL). Residues 113 to 131 (RTLQSKLVLFGREVSPAHQ) lie on the Cytoplasmic side of the membrane. A run of 2 helical transmembrane segments spans residues 132–148 (YALA…LAGA) and 149–165 (GSAV…LIGS). Positions 165 to 185 (SHAAFHQMEPADGEELQMEPV) are required for interaction with GDI1. The Cytoplasmic portion of the chain corresponds to 166–185 (HAAFHQMEPADGEELQMEPV). The required for interaction with prenylated RAB3A and VAMP2 stretch occupies residues 175-185 (ADGEELQMEPV). The homodimerization stretch occupies residues 175–185 (ADGEELQMEPV).

The protein belongs to the PRA1 family. In terms of assembly, homodimer. Interacts with VAMP2 (synaptobrevin-2), GDI1, NRDG1 and PCLO. Interacts with prenylated Rab proteins (including RAB5 and RAB6), and with the members of the Ras superfamily HRAS, RHOA, TC21, and RAP1A.

The protein localises to the cell membrane. Its subcellular location is the cytoplasm. It is found in the golgi apparatus. It localises to the cytoplasmic vesicle. The protein resides in the secretory vesicle. The protein localises to the synaptic vesicle. In terms of biological role, general Rab protein regulator required for vesicle formation from the Golgi complex. May control vesicle docking and fusion by mediating the action of Rab GTPases to the SNARE complexes. In addition it inhibits the removal of Rab GTPases from the membrane by GDI1. The protein is Prenylated Rab acceptor protein 1 (Rabac1) of Mus musculus (Mouse).